A 512-amino-acid polypeptide reads, in one-letter code: Cytochrome P450 monooxygenase FrzL (512 aa).

A helical transmembrane segment spans residues 6 to 26 (TMLAFVPYLAVFVACYGLVYY). Cys423 provides a ligand contact to heme.

The protein belongs to the cytochrome P450 family. Heme serves as cofactor.

The protein localises to the membrane. In terms of biological role, cytochrome P450 monooxygenase; part of the gene cluster that mediates the biosynthesis of the alkaloid (-)-FR901483, a potent immunosuppressant that shows efficacy in animal models and a probable inhibitor of purine nucleotide biosynthesis by targeting phosphoribosylpyrophosphate amidotransferase (PPAT). The only unassigned enzyme in the cluster is the second cytochrome P450 monooxygenase FrzL. The biosynthesis of (-)-FR901483 starts with the condensation of two L-tyrosines to yield (S,S)-dityrosyl-piperazine. This process occurs in 3 steps with the non-canonical nonribosomal peptide synthetase FrzA catalyzing the reduction of L-tyrosine into L-tyrosinal, the spontaneous condensation of 2 L-tyrosinal units, and the subsequent reduction by the NmrA-like family domain-containing oxidoreductase FrzB. The cytochrome P450 monooxygenase FrzC then performs coupling between N10 and C1' to morph the piperazine into a 1,4-diazabicyclo[3.2.1]octane spiro-fused to a 2,5-cyclohexadienone. The dienone portion is further reduced to cyclohexanone by the flavin-dependent reductase FrzD. The methyltranserases (MTs) FrzE and FrzF are then involved in the methylation at the C10' amine and the C4 phenolic oxygen, respectively. The order of the two MTs appear to be interchangeable. Cleavage of the C9-N10' bond by the dioxygenase FrzG then leads to formation of a conjugated iminium. In addition to the oxidation of C9, an additional dehydrogenation between C7 and C8 can occur to give a likely shunt product. The next biosynthetic step is the intramolecular aldol condensation catalyzed by the newly identified aldolase FrzH to yield an aza-tricyclic product with the formation of a C9-C3' bond. The short-chain dehydrogenase/reductase FrzI then produces dephospho-(-)-FR901483 that is phosphorylated at C4'-OH into (-)-FR901483 by the phosphotransferase FrzJ. The protein is Cytochrome P450 monooxygenase FrzL of Cladobotryum sp.